The sequence spans 230 residues: Antiholin-like protein LrgB (230 aa).

8 consecutive transmembrane segments (helical) span residues 5-25 (MTPYFGIVVSLIAYGIGTLLF), 30-50 (GFFLFTPLFVAMVLGIVFLKV), 61-81 (GGKMISFFLEPATIAFAIPLY), 92-112 (WQILSAIVVGSICSVVVVYIV), 126-146 (MLPQAATTAIALPISESIGGI), 149-169 (ITSFAVIFNAVIVYALGALFL), 177-197 (PIAKGLALGTAGHALGVAVGI), and 209-229 (IAVTVVGVVTVVVIPMFMPFI).

The protein belongs to the CidB/LrgB family. LrgB subfamily.

The protein localises to the cell membrane. Its function is as follows. Inhibits the expression or activity of extracellular murein hydrolases by interacting, possibly with LrgA, with the holin-like protein CidA. The LrgAB and CidA proteins may affect the proton motive force of the membrane. May be involved in programmed cell death (PCD), possibly triggering PCD in response to antibiotics and environmental stresses. In Bacillus mycoides (strain KBAB4) (Bacillus weihenstephanensis), this protein is Antiholin-like protein LrgB.